Here is a 309-residue protein sequence, read N- to C-terminus: ESX-3 secretion system protein EccE3 (309 aa).

Helical transmembrane passes span 5 to 25 (IALASLFVVAAVLAQPWQTTT) and 29 to 49 (VLGVSIAAVIVLLAWWKGMFL).

The protein belongs to the EccE family. As to quaternary structure, part of the ESX-3 / type VII secretion system (T7SS), which is composed of cytosolic and membrane components. The ESX-3 membrane complex is composed of EccB3, EccC3, EccD3 and EccE3.

The protein localises to the cell inner membrane. Part of the ESX-3 specialized secretion system, which is required for siderophore-mediated iron acquisition and for the secretion of EsxH and EsxG. This chain is ESX-3 secretion system protein EccE3, found in Mycolicibacterium smegmatis (strain ATCC 700084 / mc(2)155) (Mycobacterium smegmatis).